Reading from the N-terminus, the 62-residue chain is uncharacterized protein (62 aa).

A helical membrane pass occupies residues 15–37 (FSSGVLISNFLLFNFIIISHSSL). Residues 41–56 (TTTTTTTTTTTTNTKS) are compositionally biased toward low complexity. A disordered region spans residues 41-62 (TTTTTTTTTTTTNTKSTLHRSG).

Its subcellular location is the membrane. This is an uncharacterized protein from Dictyostelium discoideum (Social amoeba).